A 122-amino-acid chain; its full sequence is Large ribosomal subunit protein bL12 (122 aa).

Belongs to the bacterial ribosomal protein bL12 family. Homodimer. Part of the ribosomal stalk of the 50S ribosomal subunit. Forms a multimeric L10(L12)X complex, where L10 forms an elongated spine to which 2 to 4 L12 dimers bind in a sequential fashion. Binds GTP-bound translation factors.

Its function is as follows. Forms part of the ribosomal stalk which helps the ribosome interact with GTP-bound translation factors. Is thus essential for accurate translation. The polypeptide is Large ribosomal subunit protein bL12 (Actinobacillus pleuropneumoniae serotype 5b (strain L20)).